The chain runs to 116 residues: Large ribosomal subunit protein uL18 (116 aa).

Belongs to the universal ribosomal protein uL18 family. As to quaternary structure, part of the 50S ribosomal subunit; part of the 5S rRNA/L5/L18/L25 subcomplex. Contacts the 5S and 23S rRNAs.

Functionally, this is one of the proteins that bind and probably mediate the attachment of the 5S RNA into the large ribosomal subunit, where it forms part of the central protuberance. The polypeptide is Large ribosomal subunit protein uL18 (Mycoplasma pneumoniae (strain ATCC 29342 / M129 / Subtype 1) (Mycoplasmoides pneumoniae)).